The chain runs to 461 residues: MDYSYDEDLDELCPVCGDKVSGYHYGLLTCESCKGFFKRTVQNNKHYTCTESQSCKIDKTQRKRCPFCRFQKCLTVGMRLEAVRADRMRGGRNKFGPMYKRDRALKQQKKAQIRANGFKLETGPPVGVPPPPPPPPDYMLPHGLHASEPKGLASGPPAGPLGDFGAPALPMAVPSAHGPLAGYLYPAFPGRAIKSEYPEPYASPPQPGPPYGYPEPFSGGPGVPELILQLLQLEPDEDQVRARIVGCLQEPAKGRPDQPAPFSLLCRMADQTFISIVDWARRCMVFKELEVADQMTLLQNCWSELLVFDHIYRQIQHGKEGSILLVTGQEVELTTVAAQAGSLLHSLVLRAQELVLQLHALQLDRQEFVCLKFLILFSLDVKFLNNHSLVKEAQEKANAALLDYTLCHYPHCGDKFQQLLLCLVEVRALSMQAKEYLYHKHLGNEMPRNNLLIEMLQAKQT.

Residues 10-85 (DELCPVCGDK…VGMRLEAVRA (76 aa)) constitute a DNA-binding region (nuclear receptor). An NR C4-type zinc finger spans residues 13 to 33 (CPVCGDKVSGYHYGLLTCESC). Lys-34, Lys-38, and Lys-72 each carry N6-acetyllysine. An NR C4-type zinc finger spans residues 49-73 (CTESQSCKIDKTQRKRCPFCRFQKC). A disordered region spans residues 116–158 (NGFKLETGPPVGVPPPPPPPPDYMLPHGLHASEPKGLASGPPA). Lys-119 participates in a covalent cross-link: Glycyl lysine isopeptide (Lys-Gly) (interchain with G-Cter in SUMO). Residues 126 to 138 (VGVPPPPPPPPDY) show a composition bias toward pro residues. Residue Lys-194 forms a Glycyl lysine isopeptide (Lys-Gly) (interchain with G-Cter in SUMO) linkage. Ser-203 is subject to Phosphoserine; by CDK7. Residues 222–459 (GVPELILQLL…NLLIEMLQAK (238 aa)) form the NR LBD domain. The tract at residues 230–461 (LLQLEPDEDQ…LIEMLQAKQT (232 aa)) is important for dimerization. A 1,2-diacyl-sn-glycero-3-phosphocholine contacts are provided by Gly-341, Tyr-436, and Lys-440.

It belongs to the nuclear hormone receptor family. NR5 subfamily. As to quaternary structure, binds DNA as a monomer. Part of a complex consisting of SFPQ, NONO and NR5A1. Interacts with NR0B2. Interacts with DGKQ and CDK7. Binds to and activated by HIPK3. In terms of processing, may be regulated by phosphorylation and dephosphorylation. Post-translationally, acetylation stimulates the transcriptional activity. Sumoylation reduces CDK7-mediated phosphorylation on Ser-203. In terms of processing, phosphorylated on Ser-203 by CDK7. This phosphorylation promotes transcriptional activity. Adrenal, ovary, testis, placenta, adipocyte, and brain.

It is found in the nucleus. In terms of biological role, transcriptional activator. Seems to be essential for sexual differentiation and formation of the primary steroidogenic tissues. Binds to the Ad4 site found in the promoter region of steroidogenic P450 genes such as CYP11A, CYP11B and CYP21B. Also regulates the AMH/Muellerian inhibiting substance gene as well as the AHCH and STAR genes. 5'-YCAAGGYC-3' and 5'-RRAGGTCA-3' are the consensus sequences for the recognition by NR5A1. The SFPQ-NONO-NR5A1 complex binds to the CYP17 promoter and regulates basal and cAMP-dependent transcriptional activity. Binds phospholipids with a phosphatidylinositol (PI) headgroup, in particular PI(3,4)P2 and PI(3,4,5)P3. Activated by the phosphorylation of NR5A1 by HIPK3 leading to increased steroidogenic gene expression upon cAMP signaling pathway stimulation. This Bos taurus (Bovine) protein is Steroidogenic factor 1 (NR5A1).